The chain runs to 845 residues: Nuclear pore complex protein Nup107 (845 aa).

Disordered stretches follow at residues 1-26 (MADS…MPPQ) and 677-702 (QNRP…MASE). 2 stretches are compositionally biased toward polar residues: residues 7–26 (PRSS…MPPQ) and 685–694 (TSHAASSQDN).

This sequence belongs to the nucleoporin Nup84/Nup107 family. Part of the nuclear pore complex (NPC). In terms of tissue distribution, expressed in spermatocytes (at protein level).

The protein resides in the nucleus. It is found in the nuclear pore complex. The protein localises to the nucleus envelope. It localises to the nucleus membrane. Its subcellular location is the cytoplasm. The protein resides in the cytoskeleton. It is found in the spindle. The protein localises to the chromosome. It localises to the nucleus matrix. In terms of biological role, plays a role in nuclear pore complex (NPC) assembly and maintenance. Required for nuclear import of Mad. Mediates the association between the nuclear pore complex and a subset of active chromatin regions adjacent to lamin-associated domains. Plays a role in double strand break repair by relocalizing the heterochromatic double strand breaks (DSBs) to the nuclear periphery as part of the homologous recombination (HR) repair process. Regulates cytokinesis during spermatocyte meiosis by maintaining type-B lamin Lam localization to the spindle envelope. Regulates female gonad development and oogenesis. This Drosophila melanogaster (Fruit fly) protein is Nuclear pore complex protein Nup107.